Here is a 151-residue protein sequence, read N- to C-terminus: Minor capsid protein P12 (151 aa).

Hydrophobic regions lie at residues 23 to 43 (FIFF…YTIY) and 46 to 66 (VQNT…IWNF). C112 and C120 are joined by a disulfide.

In terms of assembly, interacts with the major capsid protein.

The protein resides in the virion. Functionally, one of the minor capsid proteins that constitute a network internal to the major capsid proteins and outside the lipid membrane. The minor capsid protein P12 does not serve a cross-linking function between neighboring capsomers, it may play a role in the viral capsid assembly. This chain is Minor capsid protein P12, found in Paramecium bursaria Chlorella virus 1 (PBCV-1).